A 344-amino-acid chain; its full sequence is Mitogen-activated protein kinase mpkC (344 aa).

The 280-residue stretch at 19 to 298 (YANVQPVGLG…AETALQHPYL (280 aa)) folds into the Protein kinase domain. ATP-binding positions include 25 to 33 (VGLGAFGLV) and Lys-48. The active-site Proton acceptor is Asp-140. Thr-170 carries the phosphothreonine modification. The short motif at 170–172 (TGY) is the TXY element. Tyr-172 is subject to Phosphotyrosine.

This sequence belongs to the protein kinase superfamily. Ser/Thr protein kinase family. MAP kinase subfamily. HOG1 sub-subfamily. Requires Mg(2+) as cofactor. In terms of processing, dually phosphorylated on Thr-170 and Tyr-172, which activates the enzyme.

The catalysed reaction is L-seryl-[protein] + ATP = O-phospho-L-seryl-[protein] + ADP + H(+). It carries out the reaction L-threonyl-[protein] + ATP = O-phospho-L-threonyl-[protein] + ADP + H(+). Activated by tyrosine and threonine phosphorylation. In terms of biological role, mitogen-activated protein kinase required for growth on media where sorbitol or mannitol is the sole carbon source. The sequence is that of Mitogen-activated protein kinase mpkC (mpkC) from Aspergillus oryzae (strain ATCC 42149 / RIB 40) (Yellow koji mold).